The chain runs to 331 residues: Glycerophosphodiester phosphodiesterase 1 (331 aa).

The Cytoplasmic segment spans residues 1–2; sequence MW. Residues 3–23 traverse the membrane as a helical segment; it reads LWEEQGGLMGPFSFLLLVLLL. The Lumenal segment spans residues 24-254; sequence LTRSPFNACL…WKQSMFVALD (231 aa). The GP-PDE domain maps to 65-331; that stretch reads VSAIAHRGGS…SMLEDCTPEF (267 aa). The Mg(2+) site is built by E97 and D99. The N-linked (GlcNAc...) asparagine glycan is linked to N168. Mg(2+) is bound at residue D174. N198 carries N-linked (GlcNAc...) asparagine glycosylation. The helical transmembrane segment at 255-275 threads the bilayer; sequence ILLDWSMHNILWYLCGVSAFL. At 276 to 331 the chain is on the cytoplasmic side; that stretch reads AQKDFISPDYVKKWSAKGIQVVAWTVNTFDEKSYYESHLGSSYITDSMLEDCTPEF.

The protein belongs to the glycerophosphoryl diester phosphodiesterase family. Interacts with PRAF2. Interacts with RGS16. Mg(2+) is required as a cofactor. Post-translationally, N-glycosylated.

The protein resides in the cell membrane. Its subcellular location is the cytoplasmic vesicle membrane. The enzyme catalyses sn-glycero-3-phospho-1D-myo-inositol + H2O = myo-inositol + sn-glycerol 3-phosphate + H(+). It catalyses the reaction 1-O-(1Z-octadecenyl)-sn-glycero-3-phospho-(N-5Z,8Z,11Z,14Z-eicosatetraenoyl)-ethanolamine + H2O = 1-O-(1Z-octadecenyl)-sn-glycero-3-phosphate + N-(5Z,8Z,11Z,14Z-eicosatetraenoyl)-ethanolamine + H(+). It carries out the reaction 1-O-(1Z-octadecenyl)-sn-glycero-3-phospho-(N-9Z-octadecenoyl)-ethanolamine + H2O = 1-O-(1Z-octadecenyl)-sn-glycero-3-phosphate + N-(9Z-octadecenoyl) ethanolamine + H(+). The catalysed reaction is 1-O-(1Z-octadecenyl)-sn-glycero-3-phospho-N-hexadecanoyl-ethanolamine + H2O = 1-O-(1Z-octadecenyl)-sn-glycero-3-phosphate + N-hexadecanoylethanolamine + H(+). The enzyme catalyses N-(4Z,7Z,10Z,13Z,16Z,19Z)-docosahexaenoyl-sn-glycero-3-phosphoethanolamine + H2O = N-(4Z,7Z,10Z,13Z,16Z,19Z)-docosahexaenoyl ethanolamine + sn-glycerol 3-phosphate + H(+). It catalyses the reaction N-eicosanoyl-sn-glycero-3-phosphoethanolamine + H2O = N-eicosanoyl ethanolamine + sn-glycerol 3-phosphate + H(+). It carries out the reaction N-hexadecanoyl-sn-glycero-3-phosphoethanolamine + H2O = N-hexadecanoylethanolamine + sn-glycerol 3-phosphate + H(+). The catalysed reaction is N-(9Z-octadecenoyl)-sn-glycero-3-phosphoethanolamine + H2O = N-(9Z-octadecenoyl) ethanolamine + sn-glycerol 3-phosphate + H(+). The enzyme catalyses N-(5Z,8Z,11Z,14Z-eicosatetraenoyl)-sn-glycero-3-phosphoethanolamine + H2O = N-(5Z,8Z,11Z,14Z-eicosatetraenoyl)-ethanolamine + sn-glycerol 3-phosphate + H(+). With respect to regulation, inhibited by EDTA, calcium chloride, and zinc chloride. Enhanced by magnesium chloride. Glycerophosphodiester phosphodiesterase activity can be modulated by G-protein signaling pathways. In terms of biological role, hydrolyzes the phosphodiester bond of glycerophosphodiesters such as glycerophosphoinositol (GroPIns) and glycerophosphoethanolamine (GroPEth), to yield a glycerol phosphate and an alcohol. Hydrolyzes glycerophospho-N-acylethanolamines to N-acylethanolamines in the brain and participates in bioactive N-acylethanolamine biosynthesis such as anandamide (an endocannabinoid), N-palmitoylethanolamine (an anti-inflammatory), and N-oleoylethanolamine (an anorexic). In addition, has a lysophospholipase D activity by hydrolyzing N-acyl-lysoplasmenylethanolamine (N-acyl-lysoPlsEt) to N-acylethanolamine. However lysophospholipase D activity is lower than glycerophosphodiester phosphodiesterase activity. Has little or no activity towards glycerophosphocholine. This is Glycerophosphodiester phosphodiesterase 1 from Bos taurus (Bovine).